Reading from the N-terminus, the 810-residue chain is Protein kinase C-binding protein NELL1 (810 aa).

Residues methionine 1 to glycine 21 form the signal peptide. 6 N-linked (GlcNAc...) asparagine glycosylation sites follow: asparagine 40, asparagine 53, asparagine 83, asparagine 224, asparagine 294, and asparagine 372. A Laminin G-like domain is found at alanine 57 to cysteine 227. The 62-residue stretch at lysine 271–arginine 332 folds into the VWFC 1 domain. Cystine bridges form between cysteine 395-cysteine 407, cysteine 401-cysteine 416, and cysteine 418-cysteine 432. Ca(2+)-binding residues include aspartate 434, isoleucine 435, and glutamate 437. The EGF-like 1; calcium-binding domain occupies aspartate 434–threonine 475. Disulfide bonds link cysteine 438–cysteine 451, cysteine 445–cysteine 460, cysteine 462–cysteine 474, cysteine 480–cysteine 493, cysteine 487–cysteine 502, cysteine 504–cysteine 515, cysteine 519–cysteine 529, cysteine 523–cysteine 535, cysteine 537–cysteine 546, cysteine 553–cysteine 566, cysteine 560–cysteine 575, cysteine 577–cysteine 594, cysteine 600–cysteine 613, cysteine 607–cysteine 622, and cysteine 624–cysteine 630. Ca(2+) is bound by residues asparagine 453, leucine 454, and leucine 457. Positions glutamate 476–lysine 516 constitute an EGF-like 2; calcium-binding domain. A glycan (N-linked (GlcNAc...) asparagine) is linked at asparagine 511. The 31-residue stretch at alanine 517–glutamate 547 folds into the EGF-like 3 domain. The region spanning aspartate 549–tyrosine 587 is the EGF-like 4; calcium-binding domain. A glycan (N-linked (GlcNAc...) asparagine) is linked at asparagine 562. The region spanning aspartate 596 to serine 631 is the EGF-like 5; calcium-binding domain. N-linked (GlcNAc...) asparagine glycosylation occurs at asparagine 609. VWFC domains are found at residues glycine 632 to aspartate 687 and serine 692 to valine 750. Asparagine 708 carries an N-linked (GlcNAc...) asparagine glycan.

In terms of assembly, homotrimer. Binds to PKC beta-1. Interacts with ATRAID; the interaction promotes osteoblast cell differentiation and mineralization. Interacts with ROBO3.

It is found in the cytoplasm. The protein localises to the nucleus envelope. The protein resides in the secreted. Functionally, plays a role in the control of cell growth and differentiation. Promotes osteoblast cell differentiation and terminal mineralization. The polypeptide is Protein kinase C-binding protein NELL1 (Nell1) (Mus musculus (Mouse)).